A 1056-amino-acid chain; its full sequence is Carbamoyl phosphate synthase large chain (1056 aa).

The segment at 1-401 (MPKRTDIHKI…ALHKAVRSLE (401 aa)) is carboxyphosphate synthetic domain. 12 residues coordinate ATP: Arg129, Arg169, Gly175, Gly176, Lys208, Ile210, Glu215, Gly241, Ile242, His243, Gln284, and Glu298. The 195-residue stretch at 133–327 (KELMNELGEP…IAKMAAKIAV (195 aa)) folds into the ATP-grasp 1 domain. Positions 284, 298, and 300 each coordinate Mg(2+). Gln284, Glu298, and Asn300 together coordinate Mn(2+). Residues 402–546 (IDEKDLFSAE…YSAYDHENES (145 aa)) form an oligomerization domain region. Residues 547–929 (QRTKKPSILV…ALHKAFSGAH (383 aa)) form a carbamoyl phosphate synthetic domain region. The 191-residue stretch at 671 to 861 (DQVITDLNLK…MAQVATRVIL (191 aa)) folds into the ATP-grasp 2 domain. ATP contacts are provided by Arg707, Ala746, Leu748, Glu752, Gly777, Val778, His779, Ser780, Gln820, and Glu832. Mg(2+)-binding residues include Gln820, Glu832, and Asn834. Mn(2+)-binding residues include Gln820, Glu832, and Asn834. One can recognise an MGS-like domain in the interval 930–1056 (IQVPNDGKIL…DQSLEAITIK (127 aa)). Positions 930-1056 (IQVPNDGKIL…DQSLEAITIK (127 aa)) are allosteric domain.

The protein belongs to the CarB family. In terms of assembly, composed of two chains; the small (or glutamine) chain promotes the hydrolysis of glutamine to ammonia, which is used by the large (or ammonia) chain to synthesize carbamoyl phosphate. Tetramer of heterodimers (alpha,beta)4. The cofactor is Mg(2+). Requires Mn(2+) as cofactor.

The catalysed reaction is hydrogencarbonate + L-glutamine + 2 ATP + H2O = carbamoyl phosphate + L-glutamate + 2 ADP + phosphate + 2 H(+). It catalyses the reaction hydrogencarbonate + NH4(+) + 2 ATP = carbamoyl phosphate + 2 ADP + phosphate + 2 H(+). It participates in amino-acid biosynthesis; L-arginine biosynthesis; carbamoyl phosphate from bicarbonate: step 1/1. It functions in the pathway pyrimidine metabolism; UMP biosynthesis via de novo pathway; (S)-dihydroorotate from bicarbonate: step 1/3. Its function is as follows. Large subunit of the glutamine-dependent carbamoyl phosphate synthetase (CPSase). CPSase catalyzes the formation of carbamoyl phosphate from the ammonia moiety of glutamine, carbonate, and phosphate donated by ATP, constituting the first step of 2 biosynthetic pathways, one leading to arginine and/or urea and the other to pyrimidine nucleotides. The large subunit (synthetase) binds the substrates ammonia (free or transferred from glutamine from the small subunit), hydrogencarbonate and ATP and carries out an ATP-coupled ligase reaction, activating hydrogencarbonate by forming carboxy phosphate which reacts with ammonia to form carbamoyl phosphate. This is Carbamoyl phosphate synthase large chain from Limosilactobacillus reuteri (strain DSM 20016) (Lactobacillus reuteri).